The following is a 507-amino-acid chain: MLSLFLKSLFAIIIIELTIIHALPTYTVHWKCSIQQANTSSASSNQTVQPRQHAAPSSDRIKSLPEFKGSLPELYSGYLEANSDKSLFYTYAPAVVDSETFIVWLQGGPGCAGTLGFFSENGPIEISQSSPSPSLNPESWTNFANMLWLDQPFGTGYSQGQAAYTTTIEEASSDFVNALKSFYQKFPHLMKKKLYLVGESYGSIWSANFAEALLSEPSLNINFMGVGIVSGLTADYETQEQITASIWVEHISKLGYYFNNTSSTISEEFKKRNKECQYDSVLNRLTFPTEQYPIWRPEYNFSTSTSLRKREALDGEDIGNVFNSISGCDLYSLSNFLLYLENSCVITYDVSLDCSFNEYNDPLITYLNREDVRSSLHATKASTALTSGEGVFADGCNFDLYKKIVSNNVESVLVEIIPRLTEKYKVSFLAGALDLQILWTGTLLALQNTTWNGWQGFTQSPGSLETTNGFTLDERNLAFTLSNSVGHMAPSKDPQMVREWLENTLLY.

The N-terminal stretch at 1 to 22 (MLSLFLKSLFAIIIIELTIIHA) is a signal peptide. N-linked (GlcNAc...) asparagine glycans are attached at residues N38 and N45. A disordered region spans residues 41-64 (SASSNQTVQPRQHAAPSSDRIKSL). S200 is an active-site residue. Residues N259, N260, and N300 are each glycosylated (N-linked (GlcNAc...) asparagine). The active site involves D434. The N-linked (GlcNAc...) asparagine glycan is linked to N448. H487 is a catalytic residue.

The protein belongs to the peptidase S10 family.

The protein localises to the secreted. Involved in degradation or processing of the mating pheromones. Its loss causes a persistent response to the pheromones. It may be required for stabilization of enzymes that are essential for zygote formation. May degrade the mating pheromone P-factor. This Schizosaccharomyces pombe (strain 972 / ATCC 24843) (Fission yeast) protein is Carboxypeptidase sxa2 (sxa2).